A 114-amino-acid polypeptide reads, in one-letter code: Chaperonin GroEL (114 aa).

22 to 26 (DGTTT) lines the ATP pocket.

It belongs to the chaperonin (HSP60) family. In terms of assembly, forms a cylinder of 14 subunits composed of two heptameric rings stacked back-to-back. Interacts with the co-chaperonin GroES.

It localises to the cytoplasm. It catalyses the reaction ATP + H2O + a folded polypeptide = ADP + phosphate + an unfolded polypeptide.. In terms of biological role, together with its co-chaperonin GroES, plays an essential role in assisting protein folding. The GroEL-GroES system forms a nano-cage that allows encapsulation of the non-native substrate proteins and provides a physical environment optimized to promote and accelerate protein folding. The protein is Chaperonin GroEL of Mycobacterium ulcerans.